Reading from the N-terminus, the 394-residue chain is 1-deoxy-D-xylulose 5-phosphate reductoisomerase (394 aa).

NADPH is bound by residues Thr-13, Gly-14, Ser-15, Val-16, Arg-40, Gln-41, and Asn-127. Lys-128 provides a ligand contact to 1-deoxy-D-xylulose 5-phosphate. Glu-129 lines the NADPH pocket. Asp-153 contacts Mn(2+). Residues Ser-154, Glu-155, Ser-184, and His-207 each coordinate 1-deoxy-D-xylulose 5-phosphate. Glu-155 is a binding site for Mn(2+). Position 213 (Gly-213) interacts with NADPH. Residues Ser-220, Asn-225, Lys-226, and Glu-229 each contribute to the 1-deoxy-D-xylulose 5-phosphate site. Glu-229 contacts Mn(2+).

This sequence belongs to the DXR family. Mg(2+) is required as a cofactor. It depends on Mn(2+) as a cofactor.

It carries out the reaction 2-C-methyl-D-erythritol 4-phosphate + NADP(+) = 1-deoxy-D-xylulose 5-phosphate + NADPH + H(+). Its pathway is isoprenoid biosynthesis; isopentenyl diphosphate biosynthesis via DXP pathway; isopentenyl diphosphate from 1-deoxy-D-xylulose 5-phosphate: step 1/6. Its function is as follows. Catalyzes the NADPH-dependent rearrangement and reduction of 1-deoxy-D-xylulose-5-phosphate (DXP) to 2-C-methyl-D-erythritol 4-phosphate (MEP). This is 1-deoxy-D-xylulose 5-phosphate reductoisomerase from Chromobacterium violaceum (strain ATCC 12472 / DSM 30191 / JCM 1249 / CCUG 213 / NBRC 12614 / NCIMB 9131 / NCTC 9757 / MK).